The chain runs to 73 residues: Somatostatin-2 (73 aa).

Residues 1-45 constitute a propeptide that is removed on maturation; that stretch reads SAGLLTQEWSAVEDLLAQMSLPEADAQRDAEMVSTATGGGRMNQE. A disordered region spans residues 23–58; sequence EADAQRDAEMVSTATGGGRMNQESIEPPNNLPPRER. Cysteine 62 and cysteine 73 are oxidised to a cystine.

This sequence belongs to the somatostatin family.

It localises to the secreted. Its function is as follows. Somatostatin inhibits the release of somatotropin. The chain is Somatostatin-2 (sst2) from Platichthys flesus (European flounder).